The chain runs to 194 residues: Protein GrpE (194 aa).

Polar residues predominate over residues 1–13 (MENTQENPTSQNP). The disordered stretch occupies residues 1-50 (MENTQENPTSQNPKPAEETARQAAEAAAPQQEAAANAATDSPASAEQAAL). The span at 21-50 (RQAAEAAAPQQEAAANAATDSPASAEQAAL) shows a compositional bias: low complexity.

The protein belongs to the GrpE family. In terms of assembly, homodimer.

It is found in the cytoplasm. Its function is as follows. Participates actively in the response to hyperosmotic and heat shock by preventing the aggregation of stress-denatured proteins, in association with DnaK and GrpE. It is the nucleotide exchange factor for DnaK and may function as a thermosensor. Unfolded proteins bind initially to DnaJ; upon interaction with the DnaJ-bound protein, DnaK hydrolyzes its bound ATP, resulting in the formation of a stable complex. GrpE releases ADP from DnaK; ATP binding to DnaK triggers the release of the substrate protein, thus completing the reaction cycle. Several rounds of ATP-dependent interactions between DnaJ, DnaK and GrpE are required for fully efficient folding. This Paraburkholderia xenovorans (strain LB400) protein is Protein GrpE.